The chain runs to 146 residues: Large ribosomal subunit protein uL15 (146 aa).

Positions 1–18 (MKLHELKPAEGSRKERNR) are enriched in basic and acidic residues. The segment at 1 to 54 (MKLHELKPAEGSRKERNRVGRGVATGNGKTSGRGHKGQKARSGGGVRPGFEGGQ) is disordered. Residues 42–52 (SGGGVRPGFEG) show a composition bias toward gly residues.

Belongs to the universal ribosomal protein uL15 family. Part of the 50S ribosomal subunit.

Binds to the 23S rRNA. This chain is Large ribosomal subunit protein uL15, found in Staphylococcus aureus (strain Mu3 / ATCC 700698).